A 237-amino-acid polypeptide reads, in one-letter code: MADS-box protein GGM13 (237 aa).

The MADS-box domain maps to 1–61 (MGRGKIEIKR…GKLFEYSSAS (61 aa)). Positions 84 to 174 (NQHLYCEMTR…CRLLAEQQAA (91 aa)) constitute a K-box domain.

In terms of tissue distribution, expression specific for female reproductive structures: strong at the adaxial base of the cupules, where ovules will later develop, then in the outermost cell layer of the nucellus, in the inner envelope, and in the inner half of the middle envelope at late stage of ovule development.

Its subcellular location is the nucleus. Its function is as follows. Probable transcription factor. The chain is MADS-box protein GGM13 (GGM13) from Gnetum gnemon (Spanish joint-fir).